Here is a 238-residue protein sequence, read N- to C-terminus: uncharacterized protein (238 aa).

The helical transmembrane segment at 10–33 (TLLALMISLSLSSLLLLSISHFYV) threads the bilayer.

It is found in the membrane. This is an uncharacterized protein from Haemophilus influenzae (strain ATCC 51907 / DSM 11121 / KW20 / Rd).